The following is a 426-amino-acid chain: AP-1 complex subunit mu-1 (426 aa).

The MHD domain maps to 167–425 (KNEVFLDVIE…TQNGTEYSIR (259 aa)).

It belongs to the adaptor complexes medium subunit family. Adaptor protein complex 1 (AP-1) is a heterotetramer composed of two large adaptins (gamma-type subunit apl4 and beta-type subunit apl2), a medium adaptin (mu-type subunit apm1) and a small adaptin (sigma-type subunit aps1). AP-1 interacts with clathrin. Interacts with sad1.

It localises to the cytoplasmic vesicle. The protein resides in the clathrin-coated vesicle membrane. Its subcellular location is the membrane. The protein localises to the clathrin-coated pit. Its function is as follows. Component of the adaptor complexes which link clathrin to receptors in coated vesicles. Clathrin-associated protein complexes are believed to interact with the cytoplasmic tails of membrane proteins, leading to their selection and concentration. The polypeptide is AP-1 complex subunit mu-1 (apm1) (Schizosaccharomyces pombe (strain 972 / ATCC 24843) (Fission yeast)).